The following is a 178-amino-acid chain: CDP-diacylglycerol--glycerol-3-phosphate 3-phosphatidyltransferase (178 aa).

Helical transmembrane passes span 28-48 (LSSL…GFFA), 88-108 (LIFF…IFLI), 125-145 (LFVS…VNFL), and 147-167 (ILTN…WVDY).

Belongs to the CDP-alcohol phosphatidyltransferase class-I family.

Its subcellular location is the cell membrane. It catalyses the reaction a CDP-1,2-diacyl-sn-glycerol + sn-glycerol 3-phosphate = a 1,2-diacyl-sn-glycero-3-phospho-(1'-sn-glycero-3'-phosphate) + CMP + H(+). It functions in the pathway phospholipid metabolism; phosphatidylglycerol biosynthesis; phosphatidylglycerol from CDP-diacylglycerol: step 1/2. This protein catalyzes the committed step to the synthesis of the acidic phospholipids. The protein is CDP-diacylglycerol--glycerol-3-phosphate 3-phosphatidyltransferase (pgsA) of Aquifex aeolicus (strain VF5).